A 498-amino-acid chain; its full sequence is ATP synthase subunit beta, chloroplastic (498 aa).

A compositionally biased stretch (polar residues) spans 1-14; sequence MRTNPTTSRPGVST. Residues 1–20 are disordered; the sequence is MRTNPTTSRPGVSTSEEKST. 172–179 is an ATP binding site; that stretch reads GGAGVGKT.

This sequence belongs to the ATPase alpha/beta chains family. As to quaternary structure, F-type ATPases have 2 components, CF(1) - the catalytic core - and CF(0) - the membrane proton channel. CF(1) has five subunits: alpha(3), beta(3), gamma(1), delta(1), epsilon(1). CF(0) has four main subunits: a(1), b(1), b'(1) and c(9-12).

The protein resides in the plastid. It localises to the chloroplast thylakoid membrane. It catalyses the reaction ATP + H2O + 4 H(+)(in) = ADP + phosphate + 5 H(+)(out). In terms of biological role, produces ATP from ADP in the presence of a proton gradient across the membrane. The catalytic sites are hosted primarily by the beta subunits. In Hordeum vulgare (Barley), this protein is ATP synthase subunit beta, chloroplastic.